Here is a 406-residue protein sequence, read N- to C-terminus: Probable tRNA sulfurtransferase (406 aa).

Residues 60 to 162 (PEAKARLQDT…PGAALLEVER (103 aa)) form the THUMP domain. ATP-binding positions include 180–181 (LL), 205–206 (HF), arginine 262, glycine 284, and glutamine 293.

Belongs to the ThiI family.

It is found in the cytoplasm. It carries out the reaction [ThiI sulfur-carrier protein]-S-sulfanyl-L-cysteine + a uridine in tRNA + 2 reduced [2Fe-2S]-[ferredoxin] + ATP + H(+) = [ThiI sulfur-carrier protein]-L-cysteine + a 4-thiouridine in tRNA + 2 oxidized [2Fe-2S]-[ferredoxin] + AMP + diphosphate. It catalyses the reaction [ThiS sulfur-carrier protein]-C-terminal Gly-Gly-AMP + S-sulfanyl-L-cysteinyl-[cysteine desulfurase] + AH2 = [ThiS sulfur-carrier protein]-C-terminal-Gly-aminoethanethioate + L-cysteinyl-[cysteine desulfurase] + A + AMP + 2 H(+). Its pathway is cofactor biosynthesis; thiamine diphosphate biosynthesis. In terms of biological role, catalyzes the ATP-dependent transfer of a sulfur to tRNA to produce 4-thiouridine in position 8 of tRNAs, which functions as a near-UV photosensor. Also catalyzes the transfer of sulfur to the sulfur carrier protein ThiS, forming ThiS-thiocarboxylate. This is a step in the synthesis of thiazole, in the thiamine biosynthesis pathway. The sulfur is donated as persulfide by IscS. This is Probable tRNA sulfurtransferase from Thermus thermophilus (strain ATCC 27634 / DSM 579 / HB8).